We begin with the raw amino-acid sequence, 389 residues long: GDSL esterase/lipase At1g28570 (389 aa).

Residues 1–25 (MATLFMKLVSFFLILSTFCLTTVNS) form the signal peptide. Residue Ser41 is the Nucleophile of the active site. N-linked (GlcNAc...) asparagine glycosylation is found at Asn137 and Asn319. Active-site residues include Asp344 and His347.

The protein belongs to the 'GDSL' lipolytic enzyme family.

The protein localises to the secreted. This chain is GDSL esterase/lipase At1g28570, found in Arabidopsis thaliana (Mouse-ear cress).